The following is a 525-amino-acid chain: Protein kinase PINOID 2 (525 aa).

Positions 1–27 (MANSSIFYKDNESDYESSTVGPDSSRR) are disordered. The 379-residue stretch at 87–465 (FRLLKRLGSG…SIEIKRHEFF (379 aa)) folds into the Protein kinase domain. ATP contacts are provided by residues 93–101 (LGSGDIGSV) and K118. D214 functions as the Proton acceptor in the catalytic mechanism. One can recognise an AGC-kinase C-terminal domain in the interval 466–525 (EGVNWALIRSIKPPWVPKEETSHKTKGDNRSVNYYLPPRFMMSRKERNEPYHVSNYFDYF).

The protein belongs to the protein kinase superfamily. Ser/Thr protein kinase family.

The catalysed reaction is L-seryl-[protein] + ATP = O-phospho-L-seryl-[protein] + ADP + H(+). The enzyme catalyses L-threonyl-[protein] + ATP = O-phospho-L-threonyl-[protein] + ADP + H(+). Functionally, serine/threonine-protein kinase involved in the regulation of auxin signaling. Plays a minor role in the regulation of cellular auxin efflux and cotyledon organogenesis. In Arabidopsis thaliana (Mouse-ear cress), this protein is Protein kinase PINOID 2 (PID2).